A 348-amino-acid polypeptide reads, in one-letter code: Flagellar P-ring protein (348 aa).

An N-terminal signal peptide occupies residues 1-16; it reads MRVLTIFLLFMTSIFA.

The protein belongs to the FlgI family. In terms of assembly, the basal body constitutes a major portion of the flagellar organelle and consists of four rings (L,P,S, and M) mounted on a central rod.

The protein localises to the periplasm. It is found in the bacterial flagellum basal body. Functionally, assembles around the rod to form the L-ring and probably protects the motor/basal body from shearing forces during rotation. In Campylobacter jejuni subsp. jejuni serotype O:6 (strain 81116 / NCTC 11828), this protein is Flagellar P-ring protein.